The sequence spans 160 residues: MPSFDIVSEIDAVELRNAVENSTRELASRFDFRNVDASFELKEETVKLAAEDDFQLGQMMDILRGNLAKRGVDARAMKAKDSVHIGKNWYKEAEFKQGLEALLAKKIVKLIKDAKIKVQASIQGDKVRVTGKKRDDLQEVMAMLREANLEQPLQYNNFRE.

This sequence belongs to the YajQ family.

Its function is as follows. Nucleotide-binding protein. This chain is Nucleotide-binding protein VC_1508, found in Vibrio cholerae serotype O1 (strain ATCC 39315 / El Tor Inaba N16961).